The chain runs to 340 residues: Biotin synthase (340 aa).

Positions 47–269 (SELQLSQLLS…VAVARIVCPK (223 aa)) constitute a Radical SAM core domain. The [4Fe-4S] cluster site is built by cysteine 62, cysteine 66, and cysteine 69. Residues cysteine 106, cysteine 137, cysteine 197, and arginine 273 each contribute to the [2Fe-2S] cluster site.

The protein belongs to the radical SAM superfamily. Biotin synthase family. In terms of assembly, homodimer. The cofactor is [4Fe-4S] cluster. Requires [2Fe-2S] cluster as cofactor.

The catalysed reaction is (4R,5S)-dethiobiotin + (sulfur carrier)-SH + 2 reduced [2Fe-2S]-[ferredoxin] + 2 S-adenosyl-L-methionine = (sulfur carrier)-H + biotin + 2 5'-deoxyadenosine + 2 L-methionine + 2 oxidized [2Fe-2S]-[ferredoxin]. Its pathway is cofactor biosynthesis; biotin biosynthesis; biotin from 7,8-diaminononanoate: step 2/2. In terms of biological role, catalyzes the conversion of dethiobiotin (DTB) to biotin by the insertion of a sulfur atom into dethiobiotin via a radical-based mechanism. The polypeptide is Biotin synthase (Caulobacter sp. (strain K31)).